The following is a 799-amino-acid chain: DISARM protein DrmE (799 aa).

The protein resides in the cytoplasm. Functionally, component of antiviral defense system DISARM (defense island system associated with restriction-modification), composed of DrmE, DrmA, DrmB, DrmC and DrmMII. DISARM is probably a multi-gene restriction module, this subunit has an unknown function. Expression of DISARM in B.subtilis (strain BEST7003) confers resistance to phages Nf, phi29, phi105, phi3T, SPO1, SPR and SPP1. Protection is over 10(7)-fold against phi3T, 10(4)-10(5)-fold against Nf, phi29, phi105 and SPR, 100-fold against SPO1 and 10-fold against SPP1. DISARM does not interfere with phage adsorption, but instead interferes with (phi3T) DNA replication early in its cycle, preventing replication, circularization and lysogeny and probably causes phage DNA degradation (DNA is degraded in SPP1-infected cells). This Bacillus paralicheniformis (strain ATCC 9945a / NCIMB 11709 / CD-2) protein is DISARM protein DrmE.